The primary structure comprises 126 residues: Small ribosomal subunit protein uS8 (126 aa).

Belongs to the universal ribosomal protein uS8 family. Part of the 30S ribosomal subunit. Contacts proteins S5 and S12.

Functionally, one of the primary rRNA binding proteins, it binds directly to 16S rRNA central domain where it helps coordinate assembly of the platform of the 30S subunit. In Oleidesulfovibrio alaskensis (strain ATCC BAA-1058 / DSM 17464 / G20) (Desulfovibrio alaskensis), this protein is Small ribosomal subunit protein uS8.